A 59-amino-acid chain; its full sequence is Single-pass membrane and coiled-coil domain-containing protein 4 homolog (59 aa).

Residues 1–11 (MAGRNKAKPRL) are compositionally biased toward basic residues. The segment at 1–20 (MAGRNKAKPRLSKKEKEERR) is disordered. Residues 10–30 (RLSKKEKEERRKDMAEVQEKV) are a coiled coil. Residues 30–50 (VFSVVVPVVVAFTVVIMLIVY) form a helical membrane-spanning segment.

This sequence belongs to the SMCO4 family.

The protein resides in the membrane. The sequence is that of Single-pass membrane and coiled-coil domain-containing protein 4 homolog from Argas monolakensis (Mono lake bird tick).